The primary structure comprises 364 residues: Uroporphyrinogen decarboxylase (364 aa).

Substrate-binding positions include 28–32 (RQAGR), Asp-78, Tyr-160, Thr-215, and His-333.

The protein belongs to the uroporphyrinogen decarboxylase family. As to quaternary structure, homodimer.

It is found in the cytoplasm. The enzyme catalyses uroporphyrinogen III + 4 H(+) = coproporphyrinogen III + 4 CO2. Its pathway is porphyrin-containing compound metabolism; protoporphyrin-IX biosynthesis; coproporphyrinogen-III from 5-aminolevulinate: step 4/4. In terms of biological role, catalyzes the decarboxylation of four acetate groups of uroporphyrinogen-III to yield coproporphyrinogen-III. In Burkholderia thailandensis (strain ATCC 700388 / DSM 13276 / CCUG 48851 / CIP 106301 / E264), this protein is Uroporphyrinogen decarboxylase.